The following is a 318-amino-acid chain: L-lactate dehydrogenase (318 aa).

Residues V16, D37, and Y69 each coordinate NAD(+). Substrate is bound by residues Q86, R92, and 124–127 (NPVD). Residues 122-124 (ASN) and S147 contribute to the NAD(+) site. Residue 152–155 (DSAR) participates in substrate binding. H179 functions as the Proton acceptor in the catalytic mechanism. Position 223 is a phosphotyrosine (Y223). T232 lines the substrate pocket.

The protein belongs to the LDH/MDH superfamily. LDH family. Homotetramer.

It localises to the cytoplasm. The catalysed reaction is (S)-lactate + NAD(+) = pyruvate + NADH + H(+). It functions in the pathway fermentation; pyruvate fermentation to lactate; (S)-lactate from pyruvate: step 1/1. Catalyzes the conversion of lactate to pyruvate. This chain is L-lactate dehydrogenase, found in Mycoplasma mycoides subsp. mycoides SC (strain CCUG 32753 / NCTC 10114 / PG1).